A 375-amino-acid chain; its full sequence is Histidine biosynthesis bifunctional protein HisB (375 aa).

A histidinol-phosphatase region spans residues 1 to 168; that stretch reads MTPILFVDRD…GIAHELADAP (168 aa). The active-site Nucleophile is aspartate 8. Mg(2+)-binding residues include aspartate 8, aspartate 10, and aspartate 128. The Proton donor role is filled by aspartate 10. Residues 169–375 form an imidazoleglycerol-phosphate dehydratase region; the sequence is RRAVVQRNTK…TALPTTKGAL (207 aa).

In the N-terminal section; belongs to the histidinol-phosphatase family. This sequence in the C-terminal section; belongs to the imidazoleglycerol-phosphate dehydratase family. The cofactor is Mg(2+).

The protein localises to the cytoplasm. The catalysed reaction is D-erythro-1-(imidazol-4-yl)glycerol 3-phosphate = 3-(imidazol-4-yl)-2-oxopropyl phosphate + H2O. The enzyme catalyses L-histidinol phosphate + H2O = L-histidinol + phosphate. It functions in the pathway amino-acid biosynthesis; L-histidine biosynthesis; L-histidine from 5-phospho-alpha-D-ribose 1-diphosphate: step 6/9. Its pathway is amino-acid biosynthesis; L-histidine biosynthesis; L-histidine from 5-phospho-alpha-D-ribose 1-diphosphate: step 8/9. The protein is Histidine biosynthesis bifunctional protein HisB of Xanthomonas euvesicatoria pv. vesicatoria (strain 85-10) (Xanthomonas campestris pv. vesicatoria).